The sequence spans 274 residues: HMP-PP phosphatase (274 aa).

Catalysis depends on Asp8, which acts as the Nucleophile. 3 residues coordinate Mg(2+): Asp8, Asp10, and Asp213.

The protein belongs to the HAD-like hydrolase superfamily. Cof family. The cofactor is Mg(2+).

The enzyme catalyses 4-amino-2-methyl-5-(diphosphooxymethyl)pyrimidine + H2O = 4-amino-2-methyl-5-(phosphooxymethyl)pyrimidine + phosphate + H(+). Functionally, catalyzes the hydrolysis of 4-amino-2-methyl-5-hydroxymethylpyrimidine pyrophosphate (HMP-PP) to 4-amino-2-methyl-5-hydroxymethylpyrimidine phosphate (HMP-P). This Serratia proteamaculans (strain 568) protein is HMP-PP phosphatase.